Reading from the N-terminus, the 2120-residue chain is Alpha-tectorin (2120 aa).

Residues 1-24 (MNTRSLLSAWAALLVVTVRHRAHA) form the signal peptide. N-linked (GlcNAc...) asparagine glycans are attached at residues N34, N215, N258, N277, N445, and N496. Residues 98–252 (PFCGDVANGI…GRWAFKIDGR (155 aa)) form the NIDO domain. In terms of domain architecture, VWFC spans 260–312 (SLRGQFLHQGEIFWENSNCSTKCRCLDFNNEIFCQEMLAPFETVEPKIKFFQC). Residues 317 to 490 (TACVVFGDPH…RVPHPERKCS (174 aa)) form the VWFD 1 domain. 2 disulfide bridges follow: C319–C451 and C341–C489. Residues 578–620 (PGHSHYSGCASGCPATCSDLTAPLRCTAPCPEGCECDDGHVLS) form the TIL 1 domain. N-linked (GlcNAc...) asparagine glycans are attached at residues N666, N792, N822, N834, N877, N899, N907, and N928. A VWFD 2 domain is found at 690-865 (GLCSVGQNQV…SWTTFDEICN (176 aa)). C692 and C828 are oxidised to a cystine. In terms of domain architecture, TIL 2 spans 963–1013 (CPENSHFEECMSCVETCETLATGCCMDTCTEGCQCDEGFALRSPCVPRGEC). N1025, N1041, N1207, and N1337 each carry an N-linked (GlcNAc...) asparagine glycan. One can recognise a VWFD 3 domain in the interval 1066 to 1250 (ASCIVSGYGH…SWAKRDTFCR (185 aa)). Disulfide bonds link C1068–C1213 and C1090–C1249. Residues 1345 to 1398 (CPPNSHYESCVSLCQPRCAAIRLKSDCGHYCVEGCQCDPGYVLNGKSCILPQNC) enclose the TIL 3 domain. The VWFD 4 domain maps to 1458 to 1633 (SFCLAAGGGV…KTNGMQKSCN (176 aa)). Disulfide bonds link C1460–C1594, C1482–C1632, C1684–C1742, C1708–C1751, C1753–C1785, C1773–C1865, and C1804–C1824. N-linked (GlcNAc...) asparagine glycosylation is found at N1511, N1537, N1723, N1739, N1761, N1818, N1831, N1847, N1887, and N1906. Residues 1772 to 2026 (TCKAAQMEVS…YSCKINCPQH (255 aa)) enclose the ZP domain. Disulfide bonds link C1947-C2007, C1968-C2023, and C2012-C2019. N2058 carries GPI-anchor amidated asparagine lipidation. A propeptide spans 2059–2120 (GGCEQICTSQ…LWAALHDPTS (62 aa)) (removed in mature form).

May form homomeric filament after self-association or heteromeric filament after association with beta-tectorin. At least 3 products of tectorin seem to exist: HMM, MMM and LMM. They may be generated by active processing or the result of proteolysis occurring between intrachain disulfide bonds. Post-translationally, the presence of a hydrophobic C-terminus preceded by a potential cleavage site strongly suggests that tectorins are synthesized as glycosylphosphatidylinositol-linked, membrane-bound precursors. Tectorins are targeted to the apical surface of the inner ear epithelia by the lipid and proteolytically released into the extracellular compartment. In terms of tissue distribution, expressed in the inner ear.

The protein resides in the cell membrane. It localises to the secreted. The protein localises to the extracellular space. It is found in the extracellular matrix. Its function is as follows. One of the major non-collagenous components of the tectorial membrane. The tectorial membrane is an extracellular matrix of the inner ear that covers the neuroepithelium of the cochlea and contacts the stereocilia bundles of specialized sensory hair cells. Sound induces movement of these hair cells relative to the tectorial membrane, deflects the stereocilia and leads to fluctuations in hair-cell membrane potential, transducing sound into electrical signals. This is Alpha-tectorin (TECTA) from Gallus gallus (Chicken).